We begin with the raw amino-acid sequence, 128 residues long: Ribonuclease P protein component (128 aa).

This sequence belongs to the RnpA family. As to quaternary structure, consists of a catalytic RNA component (M1 or rnpB) and a protein subunit.

The enzyme catalyses Endonucleolytic cleavage of RNA, removing 5'-extranucleotides from tRNA precursor.. RNaseP catalyzes the removal of the 5'-leader sequence from pre-tRNA to produce the mature 5'-terminus. It can also cleave other RNA substrates such as 4.5S RNA. The protein component plays an auxiliary but essential role in vivo by binding to the 5'-leader sequence and broadening the substrate specificity of the ribozyme. The polypeptide is Ribonuclease P protein component (Mycoplasma genitalium (strain ATCC 33530 / DSM 19775 / NCTC 10195 / G37) (Mycoplasmoides genitalium)).